Consider the following 67-residue polypeptide: Putative ATP synthase subunit epsilon, mitochondrial (67 aa).

It belongs to the eukaryotic ATPase epsilon family. In terms of assembly, F-type ATPases have 2 components, CF(1) - the catalytic core - and CF(0) - the membrane proton channel. CF(1) has five subunits: alpha(3), beta(3), gamma(1), delta(1), epsilon(1). CF(0) seems to have nine subunits: a, b, c, d, e, f, g, F6 and 8 (or A6L).

Its subcellular location is the mitochondrion. It is found in the mitochondrion inner membrane. Its function is as follows. Mitochondrial membrane ATP synthase (F(1)F(0) ATP synthase or Complex V) produces ATP from ADP in the presence of a proton gradient across the membrane which is generated by electron transport complexes of the respiratory chain. F-type ATPases consist of two structural domains, F(1) - containing the extramembraneous catalytic core, and F(0) - containing the membrane proton channel, linked together by a central stalk and a peripheral stalk. During catalysis, ATP synthesis in the catalytic domain of F(1) is coupled via a rotary mechanism of the central stalk subunits to proton translocation. Part of the complex F(1) domain and of the central stalk which is part of the complex rotary element. Rotation of the central stalk against the surrounding alpha(3)beta(3) subunits leads to hydrolysis of ATP in three separate catalytic sites on the beta subunits. In Schizosaccharomyces pombe (strain 972 / ATCC 24843) (Fission yeast), this protein is Putative ATP synthase subunit epsilon, mitochondrial (atp15).